The sequence spans 160 residues: MKRHAVWSSLFVVILAVLIDQGIKYLVESRMFYGQQIDLLPFLALFRTHNEGIAFSMLAWLHDGGLIAITLAVIAFVLYLWWTNAPERVFARYGFALVIGGAIGNLIDRVMHGYVVDYVLFHLPTWSFAVFNLADAFITIGAGLIILEEFLGWRRERISH.

The next 3 helical transmembrane spans lie at 6–26 (VWSSLFVVILAVLIDQGIKYL), 58–78 (LAWLHDGGLIAITLAVIAFVL), and 95–115 (FALVIGGAIGNLIDRVMHGYV). Active-site residues include aspartate 117 and aspartate 135. A helical transmembrane segment spans residues 127-147 (SFAVFNLADAFITIGAGLIIL).

The protein belongs to the peptidase A8 family.

The protein localises to the cell inner membrane. It catalyses the reaction Release of signal peptides from bacterial membrane prolipoproteins. Hydrolyzes -Xaa-Yaa-Zaa-|-(S,diacylglyceryl)Cys-, in which Xaa is hydrophobic (preferably Leu), and Yaa (Ala or Ser) and Zaa (Gly or Ala) have small, neutral side chains.. It participates in protein modification; lipoprotein biosynthesis (signal peptide cleavage). This protein specifically catalyzes the removal of signal peptides from prolipoproteins. The polypeptide is Lipoprotein signal peptidase (Brucella abortus (strain S19)).